Here is a 95-residue protein sequence, read N- to C-terminus: Small ribosomal subunit protein uS14 (95 aa).

It belongs to the universal ribosomal protein uS14 family. As to quaternary structure, part of the 30S ribosomal subunit. Contacts proteins S3 and S10.

Functionally, binds 16S rRNA, required for the assembly of 30S particles and may also be responsible for determining the conformation of the 16S rRNA at the A site. In Carsonella ruddii, this protein is Small ribosomal subunit protein uS14 (rpsN).